The chain runs to 484 residues: Glutamate--tRNA ligase (484 aa).

A 'HIGH' region motif is present at residues 9–19 (PSPTGNLHIGT). Positions 98, 100, 125, and 127 each coordinate Zn(2+). Positions 250–254 (KLSKR) match the 'KMSKS' region motif. Lys253 is an ATP binding site.

It belongs to the class-I aminoacyl-tRNA synthetase family. Glutamate--tRNA ligase type 1 subfamily. Monomer. Zn(2+) serves as cofactor.

The protein localises to the cytoplasm. The enzyme catalyses tRNA(Glu) + L-glutamate + ATP = L-glutamyl-tRNA(Glu) + AMP + diphosphate. Its function is as follows. Catalyzes the attachment of glutamate to tRNA(Glu) in a two-step reaction: glutamate is first activated by ATP to form Glu-AMP and then transferred to the acceptor end of tRNA(Glu). This chain is Glutamate--tRNA ligase, found in Crocosphaera subtropica (strain ATCC 51142 / BH68) (Cyanothece sp. (strain ATCC 51142)).